A 227-amino-acid polypeptide reads, in one-letter code: Cytochrome c oxidase subunit 2 (227 aa).

At 1-14 (MAHATQVGLQDATS) the chain is on the mitochondrial intermembrane side. A helical membrane pass occupies residues 15–45 (PIMEELISFHDHALMIIFLISFLVLYALFLT). Residues 46–59 (LTTKLTNTNITDAQ) are Mitochondrial matrix-facing. The chain crosses the membrane as a helical span at residues 60–87 (EMETVWTILPAIILVLIALPSLRILYLT). Residues 88–227 (DEINDPSFTI…IFEMGPVFTL (140 aa)) lie on the Mitochondrial intermembrane side of the membrane. The Cu cation site is built by His-161, Cys-196, Glu-198, Cys-200, His-204, and Met-207. A Mg(2+)-binding site is contributed by Glu-198.

This sequence belongs to the cytochrome c oxidase subunit 2 family. As to quaternary structure, component of the cytochrome c oxidase (complex IV, CIV), a multisubunit enzyme composed of 14 subunits. The complex is composed of a catalytic core of 3 subunits MT-CO1, MT-CO2 and MT-CO3, encoded in the mitochondrial DNA, and 11 supernumerary subunits COX4I, COX5A, COX5B, COX6A, COX6B, COX6C, COX7A, COX7B, COX7C, COX8 and NDUFA4, which are encoded in the nuclear genome. The complex exists as a monomer or a dimer and forms supercomplexes (SCs) in the inner mitochondrial membrane with NADH-ubiquinone oxidoreductase (complex I, CI) and ubiquinol-cytochrome c oxidoreductase (cytochrome b-c1 complex, complex III, CIII), resulting in different assemblies (supercomplex SCI(1)III(2)IV(1) and megacomplex MCI(2)III(2)IV(2)). Found in a complex with TMEM177, COA6, COX18, COX20, SCO1 and SCO2. Interacts with TMEM177 in a COX20-dependent manner. Interacts with COX20. Interacts with COX16. The cofactor is Cu cation.

The protein resides in the mitochondrion inner membrane. The catalysed reaction is 4 Fe(II)-[cytochrome c] + O2 + 8 H(+)(in) = 4 Fe(III)-[cytochrome c] + 2 H2O + 4 H(+)(out). Functionally, component of the cytochrome c oxidase, the last enzyme in the mitochondrial electron transport chain which drives oxidative phosphorylation. The respiratory chain contains 3 multisubunit complexes succinate dehydrogenase (complex II, CII), ubiquinol-cytochrome c oxidoreductase (cytochrome b-c1 complex, complex III, CIII) and cytochrome c oxidase (complex IV, CIV), that cooperate to transfer electrons derived from NADH and succinate to molecular oxygen, creating an electrochemical gradient over the inner membrane that drives transmembrane transport and the ATP synthase. Cytochrome c oxidase is the component of the respiratory chain that catalyzes the reduction of oxygen to water. Electrons originating from reduced cytochrome c in the intermembrane space (IMS) are transferred via the dinuclear copper A center (CU(A)) of subunit 2 and heme A of subunit 1 to the active site in subunit 1, a binuclear center (BNC) formed by heme A3 and copper B (CU(B)). The BNC reduces molecular oxygen to 2 water molecules using 4 electrons from cytochrome c in the IMS and 4 protons from the mitochondrial matrix. This Hylobates lar (Lar gibbon) protein is Cytochrome c oxidase subunit 2 (MT-CO2).